The following is a 185-amino-acid chain: Ribosome-recycling factor (185 aa).

It belongs to the RRF family.

It is found in the cytoplasm. Functionally, responsible for the release of ribosomes from messenger RNA at the termination of protein biosynthesis. May increase the efficiency of translation by recycling ribosomes from one round of translation to another. The chain is Ribosome-recycling factor from Myxococcus xanthus (strain DK1622).